The following is a 146-amino-acid chain: Hemoglobin subunit beta (146 aa).

The residue at position 1 (valine 1) is an N-acetylvaline. The Globin domain occupies 2-146; sequence HLTPEEKVAV…VANALAHKYH (145 aa). Residue threonine 12 is modified to Phosphothreonine. Serine 44 carries the phosphoserine modification. Lysine 59 carries the N6-acetyllysine modification. Histidine 63 provides a ligand contact to heme b. Lysine 82 carries the post-translational modification N6-acetyllysine. Histidine 92 serves as a coordination point for heme b. Cysteine 93 is modified (S-nitrosocysteine). An N6-acetyllysine modification is found at lysine 144.

The protein belongs to the globin family. In terms of assembly, heterotetramer of two alpha chains and two beta chains. In terms of tissue distribution, red blood cells.

Functionally, involved in oxygen transport from the lung to the various peripheral tissues. The polypeptide is Hemoglobin subunit beta (HBB) (Cercocebus atys (Sooty mangabey)).